The sequence spans 506 residues: Maturase K (506 aa).

The protein belongs to the intron maturase 2 family. MatK subfamily.

It is found in the plastid. It localises to the chloroplast. In terms of biological role, usually encoded in the trnK tRNA gene intron. Probably assists in splicing its own and other chloroplast group II introns. The sequence is that of Maturase K from Gaultheria procumbens (Wintergreen).